A 350-amino-acid chain; its full sequence is Arginine N-succinyltransferase (350 aa).

A succinyl-CoA-binding site is contributed by L125. H229 (proton donor) is an active-site residue.

Belongs to the arginine N-succinyltransferase family.

It carries out the reaction succinyl-CoA + L-arginine = N(2)-succinyl-L-arginine + CoA + H(+). The protein operates within amino-acid degradation; L-arginine degradation via AST pathway; L-glutamate and succinate from L-arginine: step 1/5. In terms of biological role, catalyzes the transfer of succinyl-CoA to arginine to produce N(2)-succinylarginine. The polypeptide is Arginine N-succinyltransferase (Yersinia pseudotuberculosis serotype O:3 (strain YPIII)).